The sequence spans 199 residues: Fe/S biogenesis protein NfuA (199 aa).

2 residues coordinate [4Fe-4S] cluster: cysteine 151 and cysteine 154.

It belongs to the NfuA family. In terms of assembly, homodimer. Requires [4Fe-4S] cluster as cofactor.

In terms of biological role, involved in iron-sulfur cluster biogenesis. Binds a 4Fe-4S cluster, can transfer this cluster to apoproteins, and thereby intervenes in the maturation of Fe/S proteins. Could also act as a scaffold/chaperone for damaged Fe/S proteins. This Xanthomonas axonopodis pv. citri (strain 306) protein is Fe/S biogenesis protein NfuA.